The sequence spans 473 residues: Protein translocase subunit SecD (473 aa).

6 consecutive transmembrane segments (helical) span residues 5-25 (VLVK…LLYP), 316-336 (ASLY…KSGG), 337-357 (IISN…MAAF), 364-384 (PGIA…VLIL), 409-429 (WSAI…LFQF), and 436-456 (GFAV…VFVT).

Belongs to the SecD/SecF family. SecD subfamily. As to quaternary structure, forms a complex with SecF. Part of the essential Sec protein translocation apparatus which comprises SecA, SecYEG and auxiliary proteins SecDF. Other proteins may also be involved.

Its subcellular location is the cell inner membrane. In terms of biological role, part of the Sec protein translocase complex. Interacts with the SecYEG preprotein conducting channel. SecDF uses the proton motive force (PMF) to complete protein translocation after the ATP-dependent function of SecA. This chain is Protein translocase subunit SecD, found in Elusimicrobium minutum (strain Pei191).